A 92-amino-acid polypeptide reads, in one-letter code: Protein S100-A12 (92 aa).

EF-hand domains are found at residues 13–48 (NIFHQYSVRKGHFDTLSKGELKQLLTKELANTIKNI) and 49–84 (KDKAVIDEIFQGLDANQDEQVDFQEFISLVAIALKA). His16 lines the Cu cation pocket. His16 contacts Zn(2+). Ser19, Lys22, and His24 together coordinate Ca(2+). Residue Asp26 participates in Cu cation binding. Residue Asp26 coordinates Zn(2+). Residues Thr27 and Glu32 each contribute to the Ca(2+) site. The interval 38–53 (TKELANTIKNIKDKAV) is hinge domain. Ca(2+) is bound by residues Asp62, Asn64, Asp66, Gln68, and Glu73. Residues His86 and His90 each contribute to the Cu cation site. Positions 86 and 90 each coordinate Zn(2+).

Belongs to the S-100 family. Homodimer. Homooligomer (tetramer or hexamer) in the presence of calcium, zinc and copper ions. Interacts with AGER and both calcium and zinc are essential for the interaction. Interacts with CACYBP in a calcium-dependent manner. As to expression, predominantly expressed by neutrophils, monocytes and activated macrophages. Expressed by eosinophils and macrophages in asthmatic airways in regions where mast cells accumulate. Found in high concentrations in the serum of patients suffering from various inflammatory disorders, such as rheumatoid arthritis, psoriatic arthritis, Crohn's disease, ulcerative colitis, and Kawasaki disease.

The protein localises to the secreted. The protein resides in the cytoplasm. It localises to the cytoskeleton. Its subcellular location is the cell membrane. In terms of biological role, S100A12 is a calcium-, zinc- and copper-binding protein which plays a prominent role in the regulation of inflammatory processes and immune response. Its pro-inflammatory activity involves recruitment of leukocytes, promotion of cytokine and chemokine production, and regulation of leukocyte adhesion and migration. Acts as an alarmin or a danger associated molecular pattern (DAMP) molecule and stimulates innate immune cells via binding to receptor for advanced glycation endproducts (AGER). Binding to AGER activates the MAP-kinase and NF-kappa-B signaling pathways leading to production of pro-inflammatory cytokines and up-regulation of cell adhesion molecules ICAM1 and VCAM1. Acts as a monocyte and mast cell chemoattractant. Can stimulate mast cell degranulation and activation which generates chemokines, histamine and cytokines inducing further leukocyte recruitment to the sites of inflammation. Can inhibit the activity of matrix metalloproteinases; MMP2, MMP3 and MMP9 by chelating Zn(2+) from their active sites. Possesses filariacidal and filariastatic activity. Calcitermin possesses antifungal activity against C.albicans and is also active against E.coli and P.aeruginosa but not L.monocytogenes and S.aureus. The protein is Protein S100-A12 (S100A12) of Homo sapiens (Human).